Reading from the N-terminus, the 429-residue chain is Serine hydroxymethyltransferase (429 aa).

(6S)-5,6,7,8-tetrahydrofolate-binding positions include L126 and 130–132; that span reads GHL. K235 carries the post-translational modification N6-(pyridoxal phosphate)lysine. A (6S)-5,6,7,8-tetrahydrofolate-binding site is contributed by 359-361; that stretch reads SPF.

Belongs to the SHMT family. As to quaternary structure, homodimer. It depends on pyridoxal 5'-phosphate as a cofactor.

It localises to the cytoplasm. The enzyme catalyses (6R)-5,10-methylene-5,6,7,8-tetrahydrofolate + glycine + H2O = (6S)-5,6,7,8-tetrahydrofolate + L-serine. It participates in one-carbon metabolism; tetrahydrofolate interconversion. It functions in the pathway amino-acid biosynthesis; glycine biosynthesis; glycine from L-serine: step 1/1. In terms of biological role, catalyzes the reversible interconversion of serine and glycine with tetrahydrofolate (THF) serving as the one-carbon carrier. This reaction serves as the major source of one-carbon groups required for the biosynthesis of purines, thymidylate, methionine, and other important biomolecules. Also exhibits THF-independent aldolase activity toward beta-hydroxyamino acids, producing glycine and aldehydes, via a retro-aldol mechanism. The chain is Serine hydroxymethyltransferase from Parasynechococcus marenigrum (strain WH8102).